Here is a 207-residue protein sequence, read N- to C-terminus: Large ribosomal subunit protein uL4 (207 aa).

Residues 54–76 (RSAVRGGGRKPWRQKGTGRARQG) form a disordered region. The span at 60 to 71 (GGRKPWRQKGTG) shows a compositional bias: basic residues.

It belongs to the universal ribosomal protein uL4 family. Part of the 50S ribosomal subunit.

Its function is as follows. One of the primary rRNA binding proteins, this protein initially binds near the 5'-end of the 23S rRNA. It is important during the early stages of 50S assembly. It makes multiple contacts with different domains of the 23S rRNA in the assembled 50S subunit and ribosome. Forms part of the polypeptide exit tunnel. The protein is Large ribosomal subunit protein uL4 of Staphylococcus haemolyticus (strain JCSC1435).